Reading from the N-terminus, the 389-residue chain is Chalcone synthase 4-1 (389 aa).

Cysteine 164 is a catalytic residue.

The protein belongs to the thiolase-like superfamily. Chalcone/stilbene synthases family.

The catalysed reaction is (E)-4-coumaroyl-CoA + 3 malonyl-CoA + 3 H(+) = 2',4,4',6'-tetrahydroxychalcone + 3 CO2 + 4 CoA. Its pathway is secondary metabolite biosynthesis; flavonoid biosynthesis. Functionally, the primary product of this enzyme is 4,2',4',6'-tetrahydroxychalcone (also termed naringenin-chalcone or chalcone) which can under specific conditions spontaneously isomerize into naringenin. This chain is Chalcone synthase 4-1 (CHS4-1), found in Medicago sativa (Alfalfa).